A 41-amino-acid chain; its full sequence is Large ribosomal subunit protein bL36 (41 aa).

This sequence belongs to the bacterial ribosomal protein bL36 family.

This is Large ribosomal subunit protein bL36 from Ruegeria sp. (strain TM1040) (Silicibacter sp.).